The following is a 617-amino-acid chain: ATP-dependent zinc metalloprotease FtsH (617 aa).

Topologically, residues 1–7 are cytoplasmic; that stretch reads MKIPFDR. A helical transmembrane segment spans residues 8-28; the sequence is WLGWPTLLLLLLGLWLLGSSL. Topologically, residues 29–102 are periplasmic; it reads RDQRTVEAVP…VSYRRVRESN (74 aa). The helical transmembrane segment at 103-123 threads the bilayer; that stretch reads WLSQLLSWMAGPLLLLGFWYF. Topologically, residues 124–617 are cytoplasmic; it reads MSRRIDGQQG…GRPAAIRQVA (494 aa). 198–205 contacts ATP; it reads GPTGTGKT. Residue His-421 coordinates Zn(2+). Glu-422 is an active-site residue. 2 residues coordinate Zn(2+): His-425 and Asp-498.

This sequence in the central section; belongs to the AAA ATPase family. In the C-terminal section; belongs to the peptidase M41 family. As to quaternary structure, homohexamer. The cofactor is Zn(2+).

It localises to the cell inner membrane. Its function is as follows. Acts as a processive, ATP-dependent zinc metallopeptidase for both cytoplasmic and membrane proteins. Plays a role in the quality control of integral membrane proteins. The chain is ATP-dependent zinc metalloprotease FtsH from Methylibium petroleiphilum (strain ATCC BAA-1232 / LMG 22953 / PM1).